The sequence spans 353 residues: ATPase GET3 (353 aa).

26–33 (KGGVGKTT) contributes to the ATP binding site. Residue aspartate 57 is part of the active site. Residues glutamate 244 and asparagine 271 each contribute to the ATP site. Positions 284 and 287 each coordinate Zn(2+).

The protein belongs to the arsA ATPase family. As to quaternary structure, homodimer. Component of the Golgi to ER traffic (GET) complex, which is composed of GET1, GET2 and GET3. Within the complex, GET1 and GET2 form a heterotetramer which is stabilized by phosphatidylinositol binding and which binds to the GET3 homodimer. Interacts with the chloride channel protein GEF1.

Its subcellular location is the cytoplasm. It is found in the endoplasmic reticulum. The protein localises to the golgi apparatus. Functionally, ATPase required for the post-translational delivery of tail-anchored (TA) proteins to the endoplasmic reticulum. Recognizes and selectively binds the transmembrane domain of TA proteins in the cytosol. This complex then targets to the endoplasmic reticulum by membrane-bound receptors GET1 and GET2, where the tail-anchored protein is released for insertion. This process is regulated by ATP binding and hydrolysis. ATP binding drives the homodimer towards the closed dimer state, facilitating recognition of newly synthesized TA membrane proteins. ATP hydrolysis is required for insertion. Subsequently, the homodimer reverts towards the open dimer state, lowering its affinity for the GET1-GET2 receptor, and returning it to the cytosol to initiate a new round of targeting. Cooperates with the HDEL receptor ERD2 to mediate the ATP-dependent retrieval of resident ER proteins that contain a C-terminal H-D-E-L retention signal from the Golgi to the ER. Involved in low-level resistance to the oxyanions arsenite and arsenate, and in heat tolerance. The polypeptide is ATPase GET3 (Zygosaccharomyces rouxii (strain ATCC 2623 / CBS 732 / NBRC 1130 / NCYC 568 / NRRL Y-229)).